We begin with the raw amino-acid sequence, 272 residues long: Shikimate dehydrogenase (NADP(+)) (272 aa).

Residues 20-22 (TMS) and threonine 67 each bind shikimate. Lysine 71 serves as the catalytic Proton acceptor. Glutamate 83 is an NADP(+) binding site. Residues asparagine 92 and aspartate 107 each contribute to the shikimate site. NADP(+) is bound by residues 129-133 (GAGGA), 153-158 (NRTKSK), and leucine 216. Tyrosine 218 provides a ligand contact to shikimate. An NADP(+)-binding site is contributed by glycine 239.

It belongs to the shikimate dehydrogenase family. As to quaternary structure, homodimer.

The catalysed reaction is shikimate + NADP(+) = 3-dehydroshikimate + NADPH + H(+). It functions in the pathway metabolic intermediate biosynthesis; chorismate biosynthesis; chorismate from D-erythrose 4-phosphate and phosphoenolpyruvate: step 4/7. Functionally, involved in the biosynthesis of the chorismate, which leads to the biosynthesis of aromatic amino acids. Catalyzes the reversible NADPH linked reduction of 3-dehydroshikimate (DHSA) to yield shikimate (SA). This chain is Shikimate dehydrogenase (NADP(+)), found in Maridesulfovibrio salexigens (strain ATCC 14822 / DSM 2638 / NCIMB 8403 / VKM B-1763) (Desulfovibrio salexigens).